The primary structure comprises 190 residues: MLNFNIFLVGPMGSGKTTIGRYLARITGKNFYDSDREIESRTGVSIPVIFEIEGESGFRQRECKIIAELVQLNNIVLATGGGAVLAAENRRELSQRGIVVYLYAPPKQLYRRTSHDNNRPLLRTGNPLERLKCLLKERDPLYREVADVIIKTGKQPVKAVANEVLRQLRQYKGGAPQRKSFVHVKSNKGA.

Position 13–18 (13–18) interacts with ATP; sequence GSGKTT. Thr-17 is a binding site for Mg(2+). Residues Asp-35, Arg-59, and Gly-81 each contribute to the substrate site. ATP is bound at residue Arg-119. Residue Arg-138 coordinates substrate. Gln-155 contacts ATP.

It belongs to the shikimate kinase family. In terms of assembly, monomer. It depends on Mg(2+) as a cofactor.

The protein resides in the cytoplasm. It catalyses the reaction shikimate + ATP = 3-phosphoshikimate + ADP + H(+). Its pathway is metabolic intermediate biosynthesis; chorismate biosynthesis; chorismate from D-erythrose 4-phosphate and phosphoenolpyruvate: step 5/7. Its function is as follows. Catalyzes the specific phosphorylation of the 3-hydroxyl group of shikimic acid using ATP as a cosubstrate. This chain is Shikimate kinase, found in Nitrosococcus oceani (strain ATCC 19707 / BCRC 17464 / JCM 30415 / NCIMB 11848 / C-107).